The chain runs to 230 residues: Small ribosomal subunit protein uS3c (230 aa).

One can recognise a KH type-2 domain in the interval 39–109 (IRSFIHSKLS…QLRVNVVEIA (71 aa)).

This sequence belongs to the universal ribosomal protein uS3 family. In terms of assembly, part of the 30S ribosomal subunit.

It localises to the plastid. The protein localises to the chloroplast. The polypeptide is Small ribosomal subunit protein uS3c (rps3) (Pyropia yezoensis (Susabi-nori)).